The primary structure comprises 312 residues: 3-methyl-2-oxobutanoate hydroxymethyltransferase (312 aa).

Belongs to the PanB family.

It carries out the reaction 3-methyl-2-oxobutanoate + (6R)-5,10-methylene-5,6,7,8-tetrahydrofolate + H2O = 2-dehydropantoate + (6S)-5,6,7,8-tetrahydrofolate. It participates in cofactor biosynthesis; (R)-pantothenate biosynthesis; (R)-pantoate from 3-methyl-2-oxobutanoate: step 1/2. Functionally, probable 3-methyl-2-oxobutanoate hydroxymethyltransferase required for pantothenic acid biosynthesis. Acts downstream in the pantothenic acid pathway. This Saccharomyces cerevisiae (strain ATCC 204508 / S288c) (Baker's yeast) protein is 3-methyl-2-oxobutanoate hydroxymethyltransferase.